A 210-amino-acid chain; its full sequence is Keratin-associated protein 4-9 (210 aa).

28 consecutive repeat copies span residues 24-28 (CCRPS), 29-33 (CCETT), 34-38 (CCRTT), 39-43 (CCRPS), 44-48 (CCVSS), 49-53 (CCRPQ), 54-58 (CCQSV), 59-63 (CCQPT), 69-73 (CCQTT), 74-78 (CCRTT), 84-88 (CCVSS), 89-93 (CCRPQ), 94-98 (CCQPA), 99-103 (CCQPT), 104-108 (CCRPS), 109-113 (CCETT), 114-118 (CCHPR), 119-123 (CCISS), 124-128 (CCRPS), 129-133 (CCVSS), 134-138 (CCKPQ), 139-143 (CCQSV), 144-148 (CCQPN), 149-153 (CCRPS), 159-163 (CCRPS), 164-168 (CCESS), 169-173 (CCRPC), and 174-178 (CCVRP). The tract at residues 24-178 (CCRPSCCETT…CCRPCCCVRP (155 aa)) is 29 X 5 AA repeats of C-C-[RQVHIEK]-[SPTR]-[VSTQCRNP].

The protein belongs to the KRTAP type 4 family. As to quaternary structure, interacts with hair keratins. As to expression, expressed in the hair follicles.

Its function is as follows. In the hair cortex, hair keratin intermediate filaments are embedded in an interfilamentous matrix, consisting of hair keratin-associated proteins (KRTAP), which are essential for the formation of a rigid and resistant hair shaft through their extensive disulfide bond cross-linking with abundant cysteine residues of hair keratins. The matrix proteins include the high-sulfur and high-glycine-tyrosine keratins. The protein is Keratin-associated protein 4-9 (KRTAP4-9) of Homo sapiens (Human).